A 99-amino-acid polypeptide reads, in one-letter code: Prostate and testis expressed protein 14 (99 aa).

The first 21 residues, 1–21, serve as a signal peptide directing secretion; it reads MEKYLLLLLLGIFLRVGFLQA. The UPAR/Ly6 domain maps to 22–99; it reads LTCVSCGRLN…CDHQNLCNKP (78 aa). Disulfide bonds link cysteine 24–cysteine 51, cysteine 27–cysteine 36, cysteine 43–cysteine 69, cysteine 73–cysteine 89, and cysteine 90–cysteine 96. Asparagine 31 carries an N-linked (GlcNAc...) asparagine glycan. A glycan (N-linked (GlcNAc...) asparagine) is linked at asparagine 75.

It belongs to the PATE family. Monomer. Post-translationally, glycosylated. As to expression, predominantly expressed in the seminal vesicles. Expressed in prostate, and to a lesser extent in the cauda epididymis.

Its subcellular location is the secreted. The chain is Prostate and testis expressed protein 14 from Mus musculus (Mouse).